The following is a 248-amino-acid chain: MAPGAPSSSPSPILAALLFSSLVLSPTLAIVVYTDREVYGAVGSQVTLHCSFWSSEWVSDDISFTWRYQPEGGRDAISIFHYAKGQPYIDEVGTFKERIQWVGDPSWKDGSIVIHNLDYSDNGTFTCDVKNPPDIVGKTSQVTLYVFEKVPTRYGVVLGAVIGGILGVVLLLLLLFYLIRYCWLRRQAALQRRLSAMEKGKFHKSSKDSSKRGRQTPVLYAMLDHSRSTKAASEKKSKGLGESRKDKK.

Positions M1–A29 are cleaved as a signal peptide. Positions I30–T143 constitute an Ig-like V-type domain. Residues I30–R153 lie on the Extracellular side of the membrane. A disulfide bond links C50 and C127. Residue N122 is glycosylated (N-linked (GlcNAc...) (complex) asparagine). A helical membrane pass occupies residues Y154–I179. The Cytoplasmic portion of the chain corresponds to R180 to K248. The residue at position 210 (S210) is a Phosphoserine; by PKC. The tract at residues M222–K248 is disordered. The span at D224–K248 shows a compositional bias: basic and acidic residues. 2 positions are modified to phosphoserine: S226 and S228. S233 is modified (phosphoserine; by PKC). S237 bears the Phosphoserine mark. Position 243 is a phosphoserine; by PKC (S243).

This sequence belongs to the myelin P0 protein family. In terms of assembly, homodimer and homotetramer. In terms of processing, N-glycosylated; contains sulfate-substituted glycan. As to expression, found only in peripheral nervous system Schwann cells.

The protein localises to the cell membrane. Its function is as follows. Is an adhesion molecule necessary for normal myelination in the peripheral nervous system. It mediates adhesion between adjacent myelin wraps and ultimately drives myelin compaction. The sequence is that of Myelin protein P0 (Mpz) from Rattus norvegicus (Rat).